The chain runs to 3902 residues: Hybrid PKS-NRPS synthetase pynA (3902 aa).

A disordered region spans residues 1 to 25 (MDTPLSSSEISPRFSNTVPSSVSSM). One can recognise a Ketosynthase family 3 (KS3) domain in the interval 29 to 441 (ADPSVIVGLA…GTNAHVILDA (413 aa)). Catalysis depends on for beta-ketoacyl synthase activity residues Cys201, His324, and His362. Positions 555–868 (VFTGQGAQWF…PYLASLTRGV (314 aa)) are malonyl-CoA:ACP transacylase (MAT) domain. The active-site For malonyltransferase activity is the Ser647. The interval 945–1080 (HSILGARMPG…GLVSVETNAL (136 aa)) is N-terminal hotdog fold. The segment at 945 to 1256 (HSILGARMPG…LEVTALGSDK (312 aa)) is dehydratase (DH) domain. The region spanning 945 to 1258 (HSILGARMPG…VTALGSDKTD (314 aa)) is the PKS/mFAS DH domain. The Proton acceptor; for dehydratase activity role is filled by His977. The interval 1100-1258 (QESIPAETLY…VTALGSDKTD (159 aa)) is C-terminal hotdog fold. Residue Asp1164 is the Proton donor; for dehydratase activity of the active site. Residues 1629–1945 (GLLETLVFED…MGKHTGKVVL (317 aa)) are enoyl reductase (ER) domain. A ketoreductase (KR) domain region spans residues 1971-2143 (TYLLVGGLGG…AGTTMNCGMI (173 aa)). One can recognise a Carrier 1 domain in the interval 2251-2328 (ERTTLVLSAF…ALVTKASGLI (78 aa)). Residue Ser2288 is modified to O-(pantetheine 4'-phosphoryl)serine. Residues 2337–2350 (KAENVDNEGAKGNE) show a composition bias toward basic and acidic residues. A disordered region spans residues 2337–2364 (KAENVDNEGAKGNEDQEVETQQGQLNQP). Residues 2374-2816 (VPMSSFQQRL…AEVNLCGALE (443 aa)) are condensation (C) domain 7. The interval 2836 to 3248 (SVGVCQRIME…NGLLTFKGRI (413 aa)) is adenylation (A) domain 8. The Carrier 2 domain occupies 3391–3467 (GDDAEILQGV…AIAGMIQKQL (77 aa)). Ser3427 is subject to O-(pantetheine 4'-phosphoryl)serine. The interval 3515 to 3774 (LTGIDTFIGL…VDFLPVDALT (260 aa)) is thioesterase (TE) domain.

This sequence in the C-terminal section; belongs to the NRP synthetase family.

The protein operates within secondary metabolite biosynthesis. In terms of biological role, hybrid PKS-NRPS synthetase; part of the gene cluster that mediates the biosynthesis of pyranonigrins, a family of antioxidative compounds. The first step of pyranonigrins biosynthesis is performed by the hybrid PKS-NRPS synthetase that condenses 6 malonyl-CoA units to an acetyl starter unit, to form a 1,3,5-trioxotetradecane-6,8-dienyl-ACP. The enoyl reductase (ER) domain of pynA is likely to be functional during the first two rounds of polyketide chain extension, to generate the saturated C-C bonds of the alkyl side chain. PynA subsequently forms the amide bond between the acyl chain and L-serine. Although pynA has a terminal reductase domain, it appears to require the thioesterase pynI for the release of the straight-chain intermediate from pynA via the formation of a tetramic acid pyranonigrin J. The methyltransferase pynC then coverts pyranonigrin J to pyranonigrin I via N-methylation. The FAD-dependent monooxygenase pynG catalyzes an epoxidation-mediated cyclization to form the dihydro-gamma-pyrone moiety, followed by pynD-catalyzed oxidation of the alcohol to the ketone and enolization to yield the characteristic tetramic acid-fused gamma-pyrone core of pyranonigrin H. Pyranonigrin H is substrate of pynH for dehydration-mediated exo-methylene formation from the serine side chain to produce pyranonigrin E, before the oxidase pynE reduces the exo-methylene of pyranonigrin E into a pendant methyl to form pyranonigrin G. The FAD-linked oxidoreductase pynB performs the reverse reaction and converts pyranonigrin G back to pyranonigrin E. This is Hybrid PKS-NRPS synthetase pynA from Aspergillus niger (strain ATCC MYA-4892 / CBS 513.88 / FGSC A1513).